Reading from the N-terminus, the 463-residue chain is Fumarate hydratase class II (463 aa).

Substrate contacts are provided by residues 98-100 (SGT), 129-132 (HPND), 139-141 (SSN), and Thr187. His188 (proton donor/acceptor) is an active-site residue. Ser318 is an active-site residue. Residues Ser319 and 324 to 326 (KVN) each bind substrate.

This sequence belongs to the class-II fumarase/aspartase family. Fumarase subfamily. As to quaternary structure, homotetramer.

It localises to the cytoplasm. The catalysed reaction is (S)-malate = fumarate + H2O. It participates in carbohydrate metabolism; tricarboxylic acid cycle; (S)-malate from fumarate: step 1/1. Functionally, involved in the TCA cycle. Catalyzes the stereospecific interconversion of fumarate to L-malate. The polypeptide is Fumarate hydratase class II (Rhizobium meliloti (strain 1021) (Ensifer meliloti)).